A 571-amino-acid polypeptide reads, in one-letter code: Proline--tRNA ligase (571 aa).

The protein belongs to the class-II aminoacyl-tRNA synthetase family. ProS type 1 subfamily. In terms of assembly, homodimer.

It localises to the cytoplasm. The catalysed reaction is tRNA(Pro) + L-proline + ATP = L-prolyl-tRNA(Pro) + AMP + diphosphate. In terms of biological role, catalyzes the attachment of proline to tRNA(Pro) in a two-step reaction: proline is first activated by ATP to form Pro-AMP and then transferred to the acceptor end of tRNA(Pro). As ProRS can inadvertently accommodate and process non-cognate amino acids such as alanine and cysteine, to avoid such errors it has two additional distinct editing activities against alanine. One activity is designated as 'pretransfer' editing and involves the tRNA(Pro)-independent hydrolysis of activated Ala-AMP. The other activity is designated 'posttransfer' editing and involves deacylation of mischarged Ala-tRNA(Pro). The misacylated Cys-tRNA(Pro) is not edited by ProRS. This chain is Proline--tRNA ligase, found in Pseudomonas putida (strain ATCC 47054 / DSM 6125 / CFBP 8728 / NCIMB 11950 / KT2440).